A 156-amino-acid chain; its full sequence is ATP synthase subunit b (156 aa).

A helical membrane pass occupies residues Leu7–Pro27.

This sequence belongs to the ATPase B chain family. In terms of assembly, F-type ATPases have 2 components, F(1) - the catalytic core - and F(0) - the membrane proton channel. F(1) has five subunits: alpha(3), beta(3), gamma(1), delta(1), epsilon(1). F(0) has three main subunits: a(1), b(2) and c(10-14). The alpha and beta chains form an alternating ring which encloses part of the gamma chain. F(1) is attached to F(0) by a central stalk formed by the gamma and epsilon chains, while a peripheral stalk is formed by the delta and b chains.

The protein localises to the cell inner membrane. F(1)F(0) ATP synthase produces ATP from ADP in the presence of a proton or sodium gradient. F-type ATPases consist of two structural domains, F(1) containing the extramembraneous catalytic core and F(0) containing the membrane proton channel, linked together by a central stalk and a peripheral stalk. During catalysis, ATP synthesis in the catalytic domain of F(1) is coupled via a rotary mechanism of the central stalk subunits to proton translocation. Functionally, component of the F(0) channel, it forms part of the peripheral stalk, linking F(1) to F(0). This Paraburkholderia phymatum (strain DSM 17167 / CIP 108236 / LMG 21445 / STM815) (Burkholderia phymatum) protein is ATP synthase subunit b.